Here is a 212-residue protein sequence, read N- to C-terminus: Peptide methionine sulfoxide reductase MsrA (212 aa).

The active site involves Cys52.

This sequence belongs to the MsrA Met sulfoxide reductase family.

The enzyme catalyses L-methionyl-[protein] + [thioredoxin]-disulfide + H2O = L-methionyl-(S)-S-oxide-[protein] + [thioredoxin]-dithiol. The catalysed reaction is [thioredoxin]-disulfide + L-methionine + H2O = L-methionine (S)-S-oxide + [thioredoxin]-dithiol. Functionally, has an important function as a repair enzyme for proteins that have been inactivated by oxidation. Catalyzes the reversible oxidation-reduction of methionine sulfoxide in proteins to methionine. The sequence is that of Peptide methionine sulfoxide reductase MsrA from Salmonella paratyphi A (strain AKU_12601).